Reading from the N-terminus, the 1010-residue chain is DENN domain-containing protein 1A (1010 aa).

A uDENN domain is found at 13-143 (FEVYIEVNRP…HGHPIPEPGT (131 aa)). A cDENN domain is found at 160–296 (ELPSIPENRN…VVSALKNRIR (137 aa)). The 78-residue stretch at 298 to 375 (MSTTTGDGVA…DGRLDLLNSG (78 aa)) folds into the dDENN domain. An FXDXF motif motif is present at residues 378-382 (FSDVF). The interval 455-554 (GFSTATEEPL…EATVKEPQST (100 aa)) is disordered. The segment covering 472–482 (IEKKRGEERRP) has biased composition (basic and acidic residues). Residues 493–502 (PRPHVPRRPK) show a composition bias toward basic residues. Over residues 509–524 (SRTTAGSSPDQPQQYR) the composition is skewed to polar residues. The segment covering 538–548 (SPEKDSSEATV) has biased composition (basic and acidic residues). A Clathrin box motif is present at residues 560-569 (SLLEDIFSNL).

The protein localises to the cytoplasmic vesicle. The protein resides in the clathrin-coated vesicle membrane. It localises to the presynaptic cell membrane. Guanine nucleotide exchange factor (GEF) regulating clathrin-mediated endocytosis through RAB35 activation. Promotes the exchange of GDP to GTP, converting inactive GDP-bound RAB35 into its active GTP-bound form. Regulates clathrin-mediated endocytosis of synaptic vesicles and mediates exit from early endosomes. Binds phosphatidylinositol-phosphates (PtdInsPs), with some preference for PtdIns(3)P. The polypeptide is DENN domain-containing protein 1A (dennd1a) (Xenopus laevis (African clawed frog)).